The primary structure comprises 562 residues: Formate--tetrahydrofolate ligase (562 aa).

An ATP-binding site is contributed by 71–78 (TPAGEGKS).

The protein belongs to the formate--tetrahydrofolate ligase family.

It carries out the reaction (6S)-5,6,7,8-tetrahydrofolate + formate + ATP = (6R)-10-formyltetrahydrofolate + ADP + phosphate. The protein operates within one-carbon metabolism; tetrahydrofolate interconversion. This Bacillus cereus (strain Q1) protein is Formate--tetrahydrofolate ligase.